The chain runs to 254 residues: tRNA (guanine-N(7)-)-methyltransferase (254 aa).

The tract at residues Met1 to Gly34 is disordered. S-adenosyl-L-methionine contacts are provided by Glu87, Glu112, Asp139, and Asp162. Asp162 is a catalytic residue. Residues Lys166, Asp198, and Thr233 to Glu236 contribute to the substrate site.

This sequence belongs to the class I-like SAM-binding methyltransferase superfamily. TrmB family.

The catalysed reaction is guanosine(46) in tRNA + S-adenosyl-L-methionine = N(7)-methylguanosine(46) in tRNA + S-adenosyl-L-homocysteine. Its pathway is tRNA modification; N(7)-methylguanine-tRNA biosynthesis. In terms of biological role, catalyzes the formation of N(7)-methylguanine at position 46 (m7G46) in tRNA. The sequence is that of tRNA (guanine-N(7)-)-methyltransferase from Bordetella pertussis (strain Tohama I / ATCC BAA-589 / NCTC 13251).